The sequence spans 569 residues: Dihydroxy-acid dehydratase (569 aa).

[2Fe-2S] cluster is bound at residue Cys-61. Asp-93 contributes to the Mg(2+) binding site. Cys-134 contributes to the [2Fe-2S] cluster binding site. Mg(2+) contacts are provided by Asp-135 and Lys-136. The residue at position 136 (Lys-136) is an N6-carboxylysine. Cys-211 lines the [2Fe-2S] cluster pocket. Mg(2+) is bound at residue Glu-462. The active-site Proton acceptor is Ser-488.

The protein belongs to the IlvD/Edd family. In terms of assembly, homodimer. Requires [2Fe-2S] cluster as cofactor. Mg(2+) serves as cofactor.

The catalysed reaction is (2R)-2,3-dihydroxy-3-methylbutanoate = 3-methyl-2-oxobutanoate + H2O. The enzyme catalyses (2R,3R)-2,3-dihydroxy-3-methylpentanoate = (S)-3-methyl-2-oxopentanoate + H2O. It participates in amino-acid biosynthesis; L-isoleucine biosynthesis; L-isoleucine from 2-oxobutanoate: step 3/4. It functions in the pathway amino-acid biosynthesis; L-valine biosynthesis; L-valine from pyruvate: step 3/4. Its function is as follows. Functions in the biosynthesis of branched-chain amino acids. Catalyzes the dehydration of (2R,3R)-2,3-dihydroxy-3-methylpentanoate (2,3-dihydroxy-3-methylvalerate) into 2-oxo-3-methylpentanoate (2-oxo-3-methylvalerate) and of (2R)-2,3-dihydroxy-3-methylbutanoate (2,3-dihydroxyisovalerate) into 2-oxo-3-methylbutanoate (2-oxoisovalerate), the penultimate precursor to L-isoleucine and L-valine, respectively. This chain is Dihydroxy-acid dehydratase, found in Tropheryma whipplei (strain TW08/27) (Whipple's bacillus).